The sequence spans 132 residues: UPF0299 membrane protein Ent638_2744 (132 aa).

4 helical membrane passes run 8–28 (VWQYLRAFILIYACLYAGIFI), 31–51 (LLPITIPGSIIGMLIMFLLLA), 63–83 (GCFVLIRYMALLFVPIGVGVM), and 93–113 (FGPIVVSCAISTLVVFLVVSW).

The protein belongs to the UPF0299 family.

The protein resides in the cell inner membrane. This Enterobacter sp. (strain 638) protein is UPF0299 membrane protein Ent638_2744.